Consider the following 115-residue polypeptide: MRVGCDIIAISRIEKIHSRHGKNFLDKFLNPKEQILIKNPATLAGLWAAKEAASKALGVGICELCSFFDIEISKDEKNAPKLKYSQKITKDFNITQTSLSISHDNGFAIAIVAVV.

Mg(2+)-binding residues include aspartate 6 and glutamate 51.

It belongs to the P-Pant transferase superfamily. AcpS family. The cofactor is Mg(2+).

It is found in the cytoplasm. The catalysed reaction is apo-[ACP] + CoA = holo-[ACP] + adenosine 3',5'-bisphosphate + H(+). Functionally, transfers the 4'-phosphopantetheine moiety from coenzyme A to a Ser of acyl-carrier-protein. In Campylobacter jejuni subsp. jejuni serotype O:2 (strain ATCC 700819 / NCTC 11168), this protein is Holo-[acyl-carrier-protein] synthase.